Here is a 106-residue protein sequence, read N- to C-terminus: Iron-sulfur cluster assembly protein CyaY (106 aa).

The protein belongs to the frataxin family.

In terms of biological role, involved in iron-sulfur (Fe-S) cluster assembly. May act as a regulator of Fe-S biogenesis. This chain is Iron-sulfur cluster assembly protein CyaY, found in Colwellia psychrerythraea (strain 34H / ATCC BAA-681) (Vibrio psychroerythus).